The chain runs to 270 residues: Tryptophan synthase alpha chain (270 aa).

Active-site proton acceptor residues include Glu-49 and Asp-60.

It belongs to the TrpA family. As to quaternary structure, tetramer of two alpha and two beta chains.

The catalysed reaction is (1S,2R)-1-C-(indol-3-yl)glycerol 3-phosphate + L-serine = D-glyceraldehyde 3-phosphate + L-tryptophan + H2O. It participates in amino-acid biosynthesis; L-tryptophan biosynthesis; L-tryptophan from chorismate: step 5/5. Functionally, the alpha subunit is responsible for the aldol cleavage of indoleglycerol phosphate to indole and glyceraldehyde 3-phosphate. This Buchnera aphidicola subsp. Diuraphis noxia protein is Tryptophan synthase alpha chain.